Here is a 360-residue protein sequence, read N- to C-terminus: Peptide chain release factor 1 (360 aa).

Gln-235 bears the N5-methylglutamine mark. The disordered stretch occupies residues Ala-284–Pro-313.

This sequence belongs to the prokaryotic/mitochondrial release factor family. Post-translationally, methylated by PrmC. Methylation increases the termination efficiency of RF1.

It localises to the cytoplasm. In terms of biological role, peptide chain release factor 1 directs the termination of translation in response to the peptide chain termination codons UAG and UAA. In Salmonella arizonae (strain ATCC BAA-731 / CDC346-86 / RSK2980), this protein is Peptide chain release factor 1.